We begin with the raw amino-acid sequence, 570 residues long: Sulfite reductase [NADPH] hemoprotein beta-component (570 aa).

The [4Fe-4S] cluster site is built by Cys434, Cys440, Cys479, and Cys483. Cys483 lines the siroheme pocket.

The protein belongs to the nitrite and sulfite reductase 4Fe-4S domain family. In terms of assembly, alpha(8)-beta(8). The alpha component is a flavoprotein, the beta component is a hemoprotein. Siroheme is required as a cofactor. Requires [4Fe-4S] cluster as cofactor.

The catalysed reaction is hydrogen sulfide + 3 NADP(+) + 3 H2O = sulfite + 3 NADPH + 4 H(+). It functions in the pathway sulfur metabolism; hydrogen sulfide biosynthesis; hydrogen sulfide from sulfite (NADPH route): step 1/1. Its function is as follows. Component of the sulfite reductase complex that catalyzes the 6-electron reduction of sulfite to sulfide. This is one of several activities required for the biosynthesis of L-cysteine from sulfate. This chain is Sulfite reductase [NADPH] hemoprotein beta-component, found in Escherichia coli O127:H6 (strain E2348/69 / EPEC).